The sequence spans 124 residues: MPTIQQLVRKGRQDKVEKTKTPALKGSPQRRGVCTRVYTTTPKKPNSALRKVARVRLNSGIEVTAYIPGVGHNLQEHSIVLVRGGRVKDLPGVRYKIVRGALDTQGVRNRKQARSRYGAKKEKG.

Residues 1–32 (MPTIQQLVRKGRQDKVEKTKTPALKGSPQRRG) form a disordered region. Over residues 11–20 (GRQDKVEKTK) the composition is skewed to basic and acidic residues. The residue at position 89 (D89) is a 3-methylthioaspartic acid.

This sequence belongs to the universal ribosomal protein uS12 family. Part of the 30S ribosomal subunit. Contacts proteins S8 and S17. May interact with IF1 in the 30S initiation complex.

Its function is as follows. With S4 and S5 plays an important role in translational accuracy. Interacts with and stabilizes bases of the 16S rRNA that are involved in tRNA selection in the A site and with the mRNA backbone. Located at the interface of the 30S and 50S subunits, it traverses the body of the 30S subunit contacting proteins on the other side and probably holding the rRNA structure together. The combined cluster of proteins S8, S12 and S17 appears to hold together the shoulder and platform of the 30S subunit. This chain is Small ribosomal subunit protein uS12, found in Frankia alni (strain DSM 45986 / CECT 9034 / ACN14a).